The sequence spans 293 residues: Acetyl-coenzyme A carboxylase carboxyl transferase subunit beta (293 aa).

Positions 29 to 293 (LWSKCPECGL…GSKSLELTNA (265 aa)) constitute a CoA carboxyltransferase N-terminal domain. 4 residues coordinate Zn(2+): cysteine 33, cysteine 36, cysteine 52, and cysteine 55. The segment at 33 to 55 (CPECGLVVYLKDLRLNASVCAGC) adopts a C4-type zinc-finger fold.

The protein belongs to the AccD/PCCB family. In terms of assembly, acetyl-CoA carboxylase is a heterohexamer composed of biotin carboxyl carrier protein (AccB), biotin carboxylase (AccC) and two subunits each of ACCase subunit alpha (AccA) and ACCase subunit beta (AccD). It depends on Zn(2+) as a cofactor.

The protein localises to the cytoplasm. It carries out the reaction N(6)-carboxybiotinyl-L-lysyl-[protein] + acetyl-CoA = N(6)-biotinyl-L-lysyl-[protein] + malonyl-CoA. It participates in lipid metabolism; malonyl-CoA biosynthesis; malonyl-CoA from acetyl-CoA: step 1/1. In terms of biological role, component of the acetyl coenzyme A carboxylase (ACC) complex. Biotin carboxylase (BC) catalyzes the carboxylation of biotin on its carrier protein (BCCP) and then the CO(2) group is transferred by the transcarboxylase to acetyl-CoA to form malonyl-CoA. The sequence is that of Acetyl-coenzyme A carboxylase carboxyl transferase subunit beta from Synechococcus sp. (strain CC9902).